The primary structure comprises 134 residues: uncharacterized protein (134 aa).

A disordered region spans residues 59–92 (VSKPKRRSPHPHGNKAADKRKTTEKEPERKKRVG). Over residues 61–71 (KPKRRSPHPHG) the composition is skewed to basic residues. Basic and acidic residues predominate over residues 73 to 87 (KAADKRKTTEKEPER).

This is an uncharacterized protein from Saccharomyces cerevisiae (strain ATCC 204508 / S288c) (Baker's yeast).